The sequence spans 445 residues: Enolase 1 (445 aa).

Substrate-binding residues include H164 and E173. The Proton donor role is filled by E216. D251, E301, and D328 together coordinate Mg(2+). The substrate site is built by E301 and D328. K353 acts as the Proton acceptor in catalysis. Substrate-binding positions include 380–383 and K404; that span reads SHRS.

It belongs to the enolase family. As to quaternary structure, homodimer. It depends on Mg(2+) as a cofactor.

The protein localises to the cytoplasm. It catalyses the reaction (2R)-2-phosphoglycerate = phosphoenolpyruvate + H2O. Its pathway is carbohydrate degradation; glycolysis; pyruvate from D-glyceraldehyde 3-phosphate: step 4/5. The polypeptide is Enolase 1 (ENO1) (Hevea brasiliensis (Para rubber tree)).